We begin with the raw amino-acid sequence, 114 residues long: Cytochrome c2 (114 aa).

Gln1 bears the Pyrrolidone carboxylic acid mark. Heme c contacts are provided by Cys13, Cys16, His17, and Met93.

The protein belongs to the cytochrome c family. In terms of processing, binds 1 heme c group covalently per subunit.

Its subcellular location is the periplasm. Functionally, cytochrome c2 is found mainly in purple, non-sulfur, photosynthetic bacteria where it functions as the electron donor to the oxidized bacteriochlorophyll in the photophosphorylation pathway. However, it may also have a role in the respiratory chain and is found in some non-photosynthetic bacteria. The sequence is that of Cytochrome c2 from Rhodopseudomonas palustris.